A 103-amino-acid polypeptide reads, in one-letter code: Large ribosomal subunit protein bL21 (103 aa).

The protein belongs to the bacterial ribosomal protein bL21 family. In terms of assembly, part of the 50S ribosomal subunit. Contacts protein L20.

This protein binds to 23S rRNA in the presence of protein L20. The polypeptide is Large ribosomal subunit protein bL21 (Serratia proteamaculans (strain 568)).